The chain runs to 414 residues: 2,3-bisphosphoglycerate-independent phosphoglycerate mutase (414 aa).

This sequence belongs to the BPG-independent phosphoglycerate mutase family. A-PGAM subfamily.

It carries out the reaction (2R)-2-phosphoglycerate = (2R)-3-phosphoglycerate. The protein operates within carbohydrate degradation; glycolysis; pyruvate from D-glyceraldehyde 3-phosphate: step 3/5. Its function is as follows. Catalyzes the interconversion of 2-phosphoglycerate and 3-phosphoglycerate. In Saccharolobus islandicus (strain M.14.25 / Kamchatka #1) (Sulfolobus islandicus), this protein is 2,3-bisphosphoglycerate-independent phosphoglycerate mutase.